A 211-amino-acid polypeptide reads, in one-letter code: Thymidylate kinase (211 aa).

11 to 18 contributes to the ATP binding site; the sequence is GPDGAGKT.

This sequence belongs to the thymidylate kinase family.

The enzyme catalyses dTMP + ATP = dTDP + ADP. Functionally, phosphorylation of dTMP to form dTDP in both de novo and salvage pathways of dTTP synthesis. The protein is Thymidylate kinase of Streptococcus pyogenes serotype M3 (strain ATCC BAA-595 / MGAS315).